An 80-amino-acid polypeptide reads, in one-letter code: Putative membrane protein insertion efficiency factor (80 aa).

It belongs to the UPF0161 family.

It is found in the cell inner membrane. Its function is as follows. Could be involved in insertion of integral membrane proteins into the membrane. In Picosynechococcus sp. (strain ATCC 27264 / PCC 7002 / PR-6) (Agmenellum quadruplicatum), this protein is Putative membrane protein insertion efficiency factor.